The sequence spans 434 residues: MSRLSKEEISERLLELIKDETKPAIGCTEPVAVAFTVATGKKYMAGEVLKIDLKVSKNILKNGKSVTIPNTEVCGLDIAGALGEICGDPEEGLFVFRNVNNEYLDKAKEMIKNKVVTLNPIENTDPVFVEATLKGEQDEVIAILKGGHTNIEKVIVNGKIAFEKDNKNKKDNKDCDFIKELSLKDIRQITEDISIEKLDFIMDGIEMNKEAAKEGLKRQKGLTLGSSLLKLQEEGKIGKDSATIARILTAAGSDLRMGGGMCPIMTSGGSGNQGLCVILPINVVAEDIKAPKERLQRAVFFGHAVNNFVKKYTGKLSAICGCAIAAGIGATAGIAWLLGGKDKEIEGAILNMLANLTGMVCDGAKGSCAIKLSTSASEAVISAYLALNDIIVPNNTGIIGNTVEDTINNLGMLCKDGFYKADDVMLSIACKEVI.

It belongs to the UPF0597 family.

This is UPF0597 protein CLB_1949 from Clostridium botulinum (strain ATCC 19397 / Type A).